We begin with the raw amino-acid sequence, 284 residues long: L-ribulose-5-phosphate 3-epimerase UlaE (284 aa).

The protein belongs to the L-ribulose-5-phosphate 3-epimerase family.

The enzyme catalyses L-ribulose 5-phosphate = L-xylulose 5-phosphate. Its pathway is cofactor degradation; L-ascorbate degradation; D-xylulose 5-phosphate from L-ascorbate: step 3/4. Catalyzes the isomerization of L-xylulose-5-phosphate to L-ribulose-5-phosphate. Is involved in the anaerobic L-ascorbate utilization. In Shigella boydii serotype 18 (strain CDC 3083-94 / BS512), this protein is L-ribulose-5-phosphate 3-epimerase UlaE.